A 254-amino-acid polypeptide reads, in one-letter code: PSME3-interacting protein (254 aa).

Position 1 is an N-acetylmethionine (M1). S17 bears the Phosphoserine mark. Positions 22 to 39 (DERRKRRQEEWEKVRKPE) are enriched in basic and acidic residues. The segment at 22–52 (DERRKRRQEEWEKVRKPEDPEECPEEVYDPR) is disordered. An N6-acetyllysine modification is found at K139. A disordered region spans residues 155–195 (GAVKHKSSESGNSVKRLKPDPEPDDKNQEPSSCKSLGNTSL). Positions 171 to 182 (LKPDPEPDDKNQ) are enriched in basic and acidic residues. Residues 183 to 195 (EPSSCKSLGNTSL) show a composition bias toward polar residues. The interval 201–254 (HCPSAAVCIGILPGLGAYSGSSDSESSSDSEGTINATGKIVSSIFRTNTFLEAP) is interaction with PSME3. Phosphoserine; by CK2 is present on residues S222 and S228.

In terms of assembly, interacts (via C-terminus) with both free and 20S proteasome-bound forms of the proteasome activator complex subunit PSME3; the interaction is direct. Post-translationally, phosphorylation by CK2 stabilizes the interaction with PSME3.

The protein resides in the nucleus. Functionally, promotes the association of the proteasome activator complex subunit PSME3 with the 20S proteasome and regulates its activity. Inhibits PSME3-mediated degradation of some proteasome substrates, probably by affecting their diffusion rate into the catalytic chamber of the proteasome. Also inhibits the interaction of PSME3 with COIL, inhibits accumulation of PSME3 in Cajal bodies and positively regulates the number of Cajal bodies in the nucleus. The chain is PSME3-interacting protein from Homo sapiens (Human).